We begin with the raw amino-acid sequence, 331 residues long: MSPPAAIFEPTVAPTGIKGKVVVPETATIPGDSQTKLLDHFGGKWDNFKFAPIRESQVSRAMTRRYFQDLDRYAESDVVIVGAGSCGLSTAYVLAKARPDLKIAIIEASVSPGGGAWLGGQLFSAMVMRRPAELFLNELGVPYEEDPDMPNYVVVKHASLFTSTLLSKVLSFPNVKLFNATCVEDLVTRPGPNGNAQEVQIAGVVTNWTLVTLHHDDHSCMDPNTINAPVIISTTGHDGPFGAFSAKRLVSMTTIDKLGGMRGLDMNSAEDAIVKNTREVAKGLIIGGMELSEIDGFNRMGPTFGAMVLSGVKAAEEALRVFDDRKRECAE.

Substrate is bound by residues Cys-86, 107 to 108 (EA), Gly-115, and Val-183. Cys-220 carries the 2,3-didehydroalanine (Cys) modification. Residues Asp-222, His-237, Met-289, and 299 to 301 (RMG) contribute to the substrate site.

It belongs to the THI4 family. In terms of assembly, homooctamer. Requires Fe cation as cofactor. Post-translationally, during the catalytic reaction, a sulfide is transferred from Cys-220 to a reaction intermediate, generating a dehydroalanine residue.

The protein resides in the cytoplasm. It is found in the nucleus. The catalysed reaction is [ADP-thiazole synthase]-L-cysteine + glycine + NAD(+) = [ADP-thiazole synthase]-dehydroalanine + ADP-5-ethyl-4-methylthiazole-2-carboxylate + nicotinamide + 3 H2O + 2 H(+). Involved in biosynthesis of the thiamine precursor thiazole. Catalyzes the conversion of NAD and glycine to adenosine diphosphate 5-(2-hydroxyethyl)-4-methylthiazole-2-carboxylic acid (ADT), an adenylated thiazole intermediate. The reaction includes an iron-dependent sulfide transfer from a conserved cysteine residue of the protein to a thiazole intermediate. The enzyme can only undergo a single turnover, which suggests it is a suicide enzyme. May have additional roles in adaptation to various stress conditions and in DNA damage tolerance. The sequence is that of Thiamine thiazole synthase from Emericella nidulans (strain FGSC A4 / ATCC 38163 / CBS 112.46 / NRRL 194 / M139) (Aspergillus nidulans).